The chain runs to 179 residues: Large ribosomal subunit protein uL6 (179 aa).

This sequence belongs to the universal ribosomal protein uL6 family. As to quaternary structure, part of the 50S ribosomal subunit.

In terms of biological role, this protein binds to the 23S rRNA, and is important in its secondary structure. It is located near the subunit interface in the base of the L7/L12 stalk, and near the tRNA binding site of the peptidyltransferase center. The chain is Large ribosomal subunit protein uL6 from Persephonella marina (strain DSM 14350 / EX-H1).